A 343-amino-acid chain; its full sequence is MTKDFRQNVFQGRSVLAEKDFSAAELEYLIDFGLHLKALKKAGIPHHYLEGKNIALLFEKSSTRTRSAFTTASIDLGAHPEYLGQNDIQLGKKESTSDTAKVLGSMFDGIEFRGFKQSDAEILARDSGVPVWNGLTDEWHPTQMLADFMTVKENFGKLQGLTLTFMGDGRNNVANSLLVTGAILGVNIHIVAPKALFPTEETQNIAKGFAEKSGAKLVITDDLDEGLKGSNVVYTDVWVSMGESNWEERVKELTPYQVNMEAMKKTGTPDDQLIFMHCLPAFHNTDTQYGKEIKEKYGITEMEVTDEVFTSKYARQFEEAENRMHSIKAMMAATLGNLFIPRV.

Carbamoyl phosphate is bound at residue 62–65 (STRT). Position 79 (His-79) interacts with Ni(2+). Carbamoyl phosphate is bound by residues Gln-89, Arg-113, and 140-143 (HPTQ). Residues Asn-172, Asp-236, and 240 to 241 (SM) each bind L-ornithine. Carbamoyl phosphate is bound by residues 278–279 (CL) and Arg-323.

Belongs to the aspartate/ornithine carbamoyltransferase superfamily. OTCase family. In terms of assembly, homohexamer; dimer of trimers. Requires Ni(2+) as cofactor.

It localises to the cytoplasm. It carries out the reaction carbamoyl phosphate + L-ornithine = L-citrulline + phosphate + H(+). The protein operates within amino-acid degradation; L-arginine degradation via ADI pathway; carbamoyl phosphate from L-arginine: step 2/2. Involved in the catabolism of arginine. Catalyzes the phosphorolysis of citrulline, the reverse reaction of the biosynthetic one, yielding ornithine and carbamoyl phosphate which serve to generate ATP from ADP. This chain is Ornithine carbamoyltransferase, catabolic, found in Lentilactobacillus hilgardii (Lactobacillus hilgardii).